A 313-amino-acid chain; its full sequence is D-apiose import binding protein (313 aa).

The first 26 residues, 1 to 26 (MKLTRRLTLAAFASALALGTAMPAFA), serve as a signal peptide directing secretion. D-apiofuranose contacts are provided by residues Asn-39, 115–116 (DR), 162–164 (DTN), Arg-168, Asn-218, Asp-243, and Gln-263.

It belongs to the bacterial solute-binding protein 2 family.

The protein localises to the periplasm. Its function is as follows. Part of an ABC transporter complex involved in D-apiose import. Binds D-apiose, D-ribose and D-ribulose. The chain is D-apiose import binding protein from Rhizobium etli (strain ATCC 51251 / DSM 11541 / JCM 21823 / NBRC 15573 / CFN 42).